We begin with the raw amino-acid sequence, 255 residues long: Type III pantothenate kinase (255 aa).

Asp-6–Val-13 is an ATP binding site. Residues Tyr-100 and Gly-107 to Arg-110 contribute to the substrate site. Asp-109 functions as the Proton acceptor in the catalytic mechanism. Asp-129 contacts K(+). An ATP-binding site is contributed by Thr-132. Thr-184 is a substrate binding site.

This sequence belongs to the type III pantothenate kinase family. Homodimer. NH4(+) serves as cofactor. K(+) is required as a cofactor.

It is found in the cytoplasm. It carries out the reaction (R)-pantothenate + ATP = (R)-4'-phosphopantothenate + ADP + H(+). The protein operates within cofactor biosynthesis; coenzyme A biosynthesis; CoA from (R)-pantothenate: step 1/5. In terms of biological role, catalyzes the phosphorylation of pantothenate (Pan), the first step in CoA biosynthesis. This chain is Type III pantothenate kinase, found in Caldanaerobacter subterraneus subsp. tengcongensis (strain DSM 15242 / JCM 11007 / NBRC 100824 / MB4) (Thermoanaerobacter tengcongensis).